The primary structure comprises 315 residues: GTP cyclohydrolase MptA 1 (315 aa).

The protein belongs to the GTP cyclohydrolase IV family. In terms of assembly, homodimer. It depends on Fe(2+) as a cofactor.

The catalysed reaction is GTP + H2O = 7,8-dihydroneopterin 2',3'-cyclic phosphate + formate + diphosphate + H(+). It functions in the pathway cofactor biosynthesis; 5,6,7,8-tetrahydromethanopterin biosynthesis. Functionally, converts GTP to 7,8-dihydro-D-neopterin 2',3'-cyclic phosphate, the first intermediate in the biosynthesis of coenzyme methanopterin. The chain is GTP cyclohydrolase MptA 1 from Methanocella arvoryzae (strain DSM 22066 / NBRC 105507 / MRE50).